Reading from the N-terminus, the 314-residue chain is 4-hydroxy-3-methylbut-2-enyl diphosphate reductase (314 aa).

C12 lines the [4Fe-4S] cluster pocket. (2E)-4-hydroxy-3-methylbut-2-enyl diphosphate is bound by residues H41 and H74. Dimethylallyl diphosphate-binding residues include H41 and H74. Isopentenyl diphosphate is bound by residues H41 and H74. C96 contributes to the [4Fe-4S] cluster binding site. H124 contacts (2E)-4-hydroxy-3-methylbut-2-enyl diphosphate. Position 124 (H124) interacts with dimethylallyl diphosphate. H124 provides a ligand contact to isopentenyl diphosphate. E126 functions as the Proton donor in the catalytic mechanism. (2E)-4-hydroxy-3-methylbut-2-enyl diphosphate is bound at residue T167. C197 contacts [4Fe-4S] cluster. (2E)-4-hydroxy-3-methylbut-2-enyl diphosphate is bound by residues S225, S226, N227, and S269. Dimethylallyl diphosphate-binding residues include S225, S226, N227, and S269. Isopentenyl diphosphate is bound by residues S225, S226, N227, and S269.

The protein belongs to the IspH family. Requires [4Fe-4S] cluster as cofactor.

It catalyses the reaction isopentenyl diphosphate + 2 oxidized [2Fe-2S]-[ferredoxin] + H2O = (2E)-4-hydroxy-3-methylbut-2-enyl diphosphate + 2 reduced [2Fe-2S]-[ferredoxin] + 2 H(+). It carries out the reaction dimethylallyl diphosphate + 2 oxidized [2Fe-2S]-[ferredoxin] + H2O = (2E)-4-hydroxy-3-methylbut-2-enyl diphosphate + 2 reduced [2Fe-2S]-[ferredoxin] + 2 H(+). The protein operates within isoprenoid biosynthesis; dimethylallyl diphosphate biosynthesis; dimethylallyl diphosphate from (2E)-4-hydroxy-3-methylbutenyl diphosphate: step 1/1. It participates in isoprenoid biosynthesis; isopentenyl diphosphate biosynthesis via DXP pathway; isopentenyl diphosphate from 1-deoxy-D-xylulose 5-phosphate: step 6/6. Its function is as follows. Catalyzes the conversion of 1-hydroxy-2-methyl-2-(E)-butenyl 4-diphosphate (HMBPP) into a mixture of isopentenyl diphosphate (IPP) and dimethylallyl diphosphate (DMAPP). Acts in the terminal step of the DOXP/MEP pathway for isoprenoid precursor biosynthesis. The sequence is that of 4-hydroxy-3-methylbut-2-enyl diphosphate reductase from Glaesserella parasuis serovar 5 (strain SH0165) (Haemophilus parasuis).